Reading from the N-terminus, the 268-residue chain is 3-methyl-2-oxobutanoate hydroxymethyltransferase (268 aa).

Mg(2+) contacts are provided by aspartate 44 and aspartate 83. Residues 44-45 (DS), aspartate 83, and lysine 113 each bind 3-methyl-2-oxobutanoate. Glutamate 115 provides a ligand contact to Mg(2+). The Proton acceptor role is filled by glutamate 183.

It belongs to the PanB family. Homodecamer; pentamer of dimers. Mg(2+) serves as cofactor.

Its subcellular location is the cytoplasm. It catalyses the reaction 3-methyl-2-oxobutanoate + (6R)-5,10-methylene-5,6,7,8-tetrahydrofolate + H2O = 2-dehydropantoate + (6S)-5,6,7,8-tetrahydrofolate. Its pathway is cofactor biosynthesis; (R)-pantothenate biosynthesis; (R)-pantoate from 3-methyl-2-oxobutanoate: step 1/2. Catalyzes the reversible reaction in which hydroxymethyl group from 5,10-methylenetetrahydrofolate is transferred onto alpha-ketoisovalerate to form ketopantoate. This chain is 3-methyl-2-oxobutanoate hydroxymethyltransferase, found in Leptospira biflexa serovar Patoc (strain Patoc 1 / Ames).